A 306-amino-acid chain; its full sequence is Putative dihydroorotate dehydrogenase A (fumarate) (306 aa).

FMN-binding positions include Ser-20 and 44 to 45 (KG). Substrate-binding positions include Lys-44 and 68 to 72 (NSIGL). The FMN site is built by Asn-98 and Asn-126. Asn-126 is a substrate binding site. Cys-129 acts as the Nucleophile in catalysis. FMN is bound by residues Lys-164 and Ile-190. 191 to 192 (NT) serves as a coordination point for substrate. FMN-binding positions include Gly-216, 244-245 (GG), and 266-267 (GT).

Belongs to the dihydroorotate dehydrogenase family. Type 1 subfamily. As to quaternary structure, homodimer. It depends on FMN as a cofactor.

Its subcellular location is the cytoplasm. The catalysed reaction is (S)-dihydroorotate + fumarate = orotate + succinate. It functions in the pathway pyrimidine metabolism; UMP biosynthesis via de novo pathway. In terms of biological role, catalyzes the conversion of dihydroorotate to orotate with fumarate as the electron acceptor. This Aquifex aeolicus (strain VF5) protein is Putative dihydroorotate dehydrogenase A (fumarate) (pyrD).